The sequence spans 391 residues: Protein CapJ (391 aa).

Its pathway is capsule biogenesis; capsule polysaccharide biosynthesis. Functionally, required for the biosynthesis of type 1 capsular polysaccharide. The sequence is that of Protein CapJ (capJ) from Staphylococcus aureus.